The chain runs to 38 residues: Anthranilate phosphoribosyltransferase (38 aa).

Belongs to the anthranilate phosphoribosyltransferase family. In terms of assembly, homodimer.

The enzyme catalyses N-(5-phospho-beta-D-ribosyl)anthranilate + diphosphate = 5-phospho-alpha-D-ribose 1-diphosphate + anthranilate. It participates in amino-acid biosynthesis; L-tryptophan biosynthesis; L-tryptophan from chorismate: step 2/5. Its function is as follows. Catalyzes the transfer of the phosphoribosyl group of 5-phosphorylribose-1-pyrophosphate (PRPP) to anthranilate to yield N-(5'-phosphoribosyl)-anthranilate (PRA). In Serratia marcescens, this protein is Anthranilate phosphoribosyltransferase (trpD).